A 270-amino-acid chain; its full sequence is Chromo domain-containing protein cec-4 (270 aa).

Disordered stretches follow at residues 1–24 and 143–229; these read MAKKTVEGEHGTPKTNFTKKETSK and KIAQ…KNDV. In terms of domain architecture, Chromo spans 87–147; that stretch reads YAVERVLAHR…HQEDLKIAQT (61 aa). Basic residues-rich tracts occupy residues 151-167 and 187-197; these read TPSKTPKKTPKSLKRRA and TPKQSTKKLKR. Over residues 205-229 the composition is skewed to basic and acidic residues; sequence LVEKSKKKAIPDLENHTLDQEKNDV.

As to quaternary structure, interacts with mono-, di- and tri-methylated 'Lys-9' residues on histone H3. Weakly interacts with methylated 'Lys-37' residues on histone H3.

It is found in the nucleus inner membrane. The protein resides in the membrane. Chromatin anchor protein which binds to methylated lysine residues on histone H3, thereby recruiting heterochromatin to the nuclear periphery, especially in embryonic cells, with a lesser role in differentiated cells. May be required for the correct positioning of chromatin and nucleoli in embryos. The protein is Chromo domain-containing protein cec-4 of Caenorhabditis elegans.